A 368-amino-acid chain; its full sequence is MNKTITALTIIMASFATNASVLPETPVPFKSGTGAIDNDTVYIGLGSAGTAWYKLDTQAKDKKWTALAAFPGGPRDQATSAFIDGNLYVFGGIGKNSEGLTQVFNDVHKYNPKTNSWVKLMSHAPMGMAGHVTFVHNGKAYVTGGVNQNIFNGYFEDLNEAGKDSTTIDKINAHYFDKKAEDYFFNKFLLSFDPSTQQWSYAGESPWYGTAGAAVVNKGDKTWLINGEAKPGLRTDAVFELDFTGNNLKWNKLAPVASPDGVAGGFAGMSNDSLIFAGGAGFKGSRENYQNGKNYAHEGLKKSYSADIHLWHNGKWDKSGELSQGRAYGVSLPWNNSLLIIGGETAGGKAVTDSVLISVKDNKVTVQN.

The first 19 residues, Met1–Ala19, serve as a signal peptide directing secretion. Kelch repeat units lie at residues Thr40 to Asp84, Asn86 to Asn137, Lys139 to Ala173, His174 to Gly219, Thr222 to Gly265, Glu287 to Asn336, and Leu338 to Gln367. The active-site Proton acceptor is Glu228.

Belongs to the NanM family. As to quaternary structure, homodimer.

It is found in the periplasm. The enzyme catalyses N-acetyl-alpha-neuraminate = N-acetyl-beta-neuraminate. Functionally, converts alpha-N-acetylneuranimic acid (Neu5Ac) to the beta-anomer, accelerating the equilibrium between the alpha- and beta-anomers. Probably facilitates sialidase-negative bacteria to compete successfully for limited amounts of extracellular Neu5Ac, which is likely taken up in the beta-anomer. In addition, the rapid removal of sialic acid from solution might be advantageous to the bacterium to damp down host responses. The sequence is that of N-acetylneuraminate epimerase from Escherichia coli O1:K1 / APEC.